The following is a 93-amino-acid chain: Small ribosomal subunit protein uS19c (93 aa).

Belongs to the universal ribosomal protein uS19 family.

The protein resides in the plastid. Its subcellular location is the chloroplast. Functionally, protein S19 forms a complex with S13 that binds strongly to the 16S ribosomal RNA. The sequence is that of Small ribosomal subunit protein uS19c from Lolium perenne (Perennial ryegrass).